Here is a 38-residue protein sequence, read N- to C-terminus: MKVRASVKKMCDKCRVIRRRGRVMVICSANPKHKQRQG.

This sequence belongs to the bacterial ribosomal protein bL36 family.

This Synechocystis sp. (strain ATCC 27184 / PCC 6803 / Kazusa) protein is Large ribosomal subunit protein bL36.